Here is an 824-residue protein sequence, read N- to C-terminus: FT-interacting protein 1 (824 aa).

C2 domains are found at residues 48 to 170 (WLGL…PQWY), 217 to 341 (VRGE…SRWF), and 385 to 522 (YISD…THAY). 3 helical membrane-spanning segments follow: residues 625–645 (AVSL…VCHW), 657–677 (LLLI…LYMF), and 764–784 (ATCL…VTPF).

The protein belongs to the MCTP family. In terms of assembly, interacts with RFT1 and PI4KG4. In terms of tissue distribution, specifically expressed in the phloem including companion cells.

The protein resides in the endoplasmic reticulum membrane. Functionally, involved in the export of the long day-specific flower-promoting signal (florigen) RFT1 from the phloem companion cells to sieve elements. Promotes flowering under long days through the transport of RFT1 from the leaves to the shoot apical meristem (SAM). This chain is FT-interacting protein 1, found in Oryza sativa subsp. japonica (Rice).